The following is a 324-amino-acid chain: Beta-ketoacyl-[acyl-carrier-protein] synthase III (324 aa).

Residues cysteine 113 and histidine 251 contribute to the active site. The ACP-binding stretch occupies residues 252–256 (QANKR). Asparagine 281 is an active-site residue.

Belongs to the thiolase-like superfamily. FabH family. Homodimer.

It localises to the cytoplasm. The enzyme catalyses malonyl-[ACP] + acetyl-CoA + H(+) = 3-oxobutanoyl-[ACP] + CO2 + CoA. It participates in lipid metabolism; fatty acid biosynthesis. Functionally, catalyzes the condensation reaction of fatty acid synthesis by the addition to an acyl acceptor of two carbons from malonyl-ACP. Catalyzes the first condensation reaction which initiates fatty acid synthesis and may therefore play a role in governing the total rate of fatty acid production. Possesses both acetoacetyl-ACP synthase and acetyl transacylase activities. Its substrate specificity determines the biosynthesis of branched-chain and/or straight-chain of fatty acids. The chain is Beta-ketoacyl-[acyl-carrier-protein] synthase III from Bartonella henselae (strain ATCC 49882 / DSM 28221 / CCUG 30454 / Houston 1) (Rochalimaea henselae).